The primary structure comprises 641 residues: Putative ABC transporter ATP-binding protein MA_0870 (641 aa).

Positions 10–250 (IEIKDLWYTY…IEVFHRLGLR (241 aa)) constitute an ABC transporter 1 domain. An ATP-binding site is contributed by 44 to 51 (GPTGCGKS). The tract at residues 286 to 332 (VKTPRNFSNPEEETGRRTDPAERNEFVNTGSGNIKYGDNRSENKGSE) is disordered. Basic and acidic residues-rich tracts occupy residues 298 to 310 (ETGR…ERNE) and 322 to 332 (GDNRSENKGSE). The ABC transporter 2 domain maps to 338-566 (ISIRDLWSGY…IEILKQASLT (229 aa)). 371–378 (GTNGSGKS) provides a ligand contact to ATP.

The protein belongs to the ABC transporter superfamily.

Its subcellular location is the cell membrane. Probably part of an ABC transporter complex. Responsible for energy coupling to the transport system. This Methanosarcina acetivorans (strain ATCC 35395 / DSM 2834 / JCM 12185 / C2A) protein is Putative ABC transporter ATP-binding protein MA_0870.